The chain runs to 465 residues: Putative subtilisin-like proteinase 1 (465 aa).

An N-terminal signal peptide occupies residues 1–17 (MILAIISLSVVICREVS). An Inhibitor I9 domain is found at 19–90 (YIVMFDQDPS…VKMVVKDSPV (72 aa)). Residues 115 to 447 (PWGLARVGGS…PSLFNANKKK (333 aa)) form the Peptidase S8 domain. Active-site charge relay system residues include Asp-148 and His-180. Cys-329 and Cys-360 are disulfide-bonded. The Charge relay system role is filled by Ser-386.

It belongs to the peptidase S8 family.

The protein resides in the secreted. Its subcellular location is the extracellular space. In terms of biological role, may be involved in the degradation of proteins for nutrient acquisition or possess a regulatory function by proteolytic activation of proproteins. This chain is Putative subtilisin-like proteinase 1 (SPL1), found in Encephalitozoon cuniculi (strain GB-M1) (Microsporidian parasite).